Consider the following 200-residue polypeptide: Cytochrome c biogenesis ATP-binding export protein CcmA (200 aa).

In terms of domain architecture, ABC transporter spans methionine 1–alanine 200. An ATP-binding site is contributed by glycine 35–threonine 42.

Belongs to the ABC transporter superfamily. CcmA exporter (TC 3.A.1.107) family. In terms of assembly, the complex is composed of two ATP-binding proteins (CcmA) and two transmembrane proteins (CcmB).

Its subcellular location is the cell inner membrane. The enzyme catalyses heme b(in) + ATP + H2O = heme b(out) + ADP + phosphate + H(+). In terms of biological role, part of the ABC transporter complex CcmAB involved in the biogenesis of c-type cytochromes; once thought to export heme, this seems not to be the case, but its exact role is uncertain. Responsible for energy coupling to the transport system. The polypeptide is Cytochrome c biogenesis ATP-binding export protein CcmA (Rhodopseudomonas palustris (strain HaA2)).